The sequence spans 549 residues: Hydroxylamine reductase (549 aa).

Positions 3, 6, 15, and 21 each coordinate [4Fe-4S] cluster. 8 residues coordinate hybrid [4Fe-2O-2S] cluster: histidine 244, glutamate 268, cysteine 313, cysteine 405, cysteine 433, cysteine 458, glutamate 492, and lysine 494. Cysteine 405 carries the post-translational modification Cysteine persulfide.

It belongs to the HCP family. It depends on [4Fe-4S] cluster as a cofactor. Requires hybrid [4Fe-2O-2S] cluster as cofactor.

The protein localises to the cytoplasm. It carries out the reaction A + NH4(+) + H2O = hydroxylamine + AH2 + H(+). Its function is as follows. Catalyzes the reduction of hydroxylamine to form NH(3) and H(2)O. This is Hydroxylamine reductase from Crocosphaera subtropica (strain ATCC 51142 / BH68) (Cyanothece sp. (strain ATCC 51142)).